The following is a 189-amino-acid chain: MAQLYYKYGTMNSGKTIEILKVAHNYEEQGKPVVIMTSALDTRDEFGVVSSRIGMRREAVPISDDMDIFSYIQNLPQKPYCVLIDECQFLSKKNVYDLARVVDDLDVPVMAFGLKNDFQNNLFEGSKHLLLLADKIDEIKTICQYCSKKATMVLRTENGKPVYEGDQIQIGGNETYIPVCRKHYFNPDI.

Residues 9–16 (GTMNSGKT) and 85–88 (DECQ) each bind ATP. The Proton acceptor role is filled by Glu86. Residues Cys143, Cys146, Cys180, and His183 each contribute to the Zn(2+) site.

Belongs to the thymidine kinase family. Homotetramer.

The protein localises to the cytoplasm. The catalysed reaction is thymidine + ATP = dTMP + ADP + H(+). The sequence is that of Thymidine kinase from Streptococcus agalactiae serotype Ia (strain ATCC 27591 / A909 / CDC SS700).